The chain runs to 207 residues: Prolactin (207 aa).

A signal peptide spans K1–G20. 2 disulfide bridges follow: C66-C180 and C197-C207.

It belongs to the somatotropin/prolactin family. Pituitary gland.

The protein localises to the secreted. The polypeptide is Prolactin (prl) (Hypophthalmichthys molitrix (Silver carp)).